The primary structure comprises 373 residues: 3 beta-hydroxysteroid dehydrogenase/Delta 5--&gt;4-isomerase type 1 (373 aa).

NADP(+)-binding positions include 10–15 (GAGGFV), Y155, and K159. K159 acts as the Proton donor in catalysis. Residues 288–308 (LPLLYWLAFLLETVSFLLRPF) traverse the membrane as a helical segment.

The protein belongs to the 3-beta-HSD family. Adrenal glands, kidney, testes and ovaries.

The protein resides in the endoplasmic reticulum membrane. It is found in the mitochondrion membrane. It carries out the reaction a 3beta-hydroxy-Delta(5)-steroid + NAD(+) = a 3-oxo-Delta(5)-steroid + NADH + H(+). The catalysed reaction is pregnenolone + NAD(+) = pregn-5-ene-3,20-dione + NADH + H(+). It catalyses the reaction 3beta-hydroxyandrost-5-en-17-one + NAD(+) = androst-5-ene-3,17-dione + NADH + H(+). The enzyme catalyses androst-5-en-3beta,17beta-diol + NAD(+) = 17beta-hydroxy-androst-5-en-3-one + NADH + H(+). It carries out the reaction a 3beta-hydroxysteroid + NADP(+) = a 3-oxosteroid + NADPH + H(+). The catalysed reaction is 5alpha-androstane-3beta,17beta-diol + NADP(+) = 17beta-hydroxy-5alpha-androstan-3-one + NADPH + H(+). It catalyses the reaction 3beta-hydroxy-5alpha-androstan-17-one + NADP(+) = 5alpha-androstan-3,17-dione + NADPH + H(+). The enzyme catalyses a 3-oxo-Delta(5)-steroid = a 3-oxo-Delta(4)-steroid. It carries out the reaction pregn-5-ene-3,20-dione = progesterone. The catalysed reaction is androst-5-ene-3,17-dione = androst-4-ene-3,17-dione. It catalyses the reaction 17beta-hydroxy-androst-5-en-3-one = testosterone. The enzyme catalyses 5alpha-androstane-3beta,17beta-diol + NAD(+) = 17beta-hydroxy-5alpha-androstan-3-one + NADH + H(+). It functions in the pathway steroid hormone biosynthesis. Its pathway is steroid metabolism. In terms of biological role, a bifunctional enzyme responsible for the oxidation and isomerization of 3beta-hydroxy-Delta(5)-steroid precursors to 3-oxo-Delta(4)-steroids, an essential step in steroid hormone biosynthesis. Specifically catalyzes the conversion of pregnenolone to progesterone, dehydroepiandrosterone (DHEA) to 4-androstenedione, and androstenediol to testosterone. Additionally, catalyzes the interconversion between 3beta-hydroxy and 3-oxo-5alpha-androstane steroids controlling the bioavalability of the active forms. Specifically converts dihydrotestosterone to its inactive form 5alpha-androstanediol, that does not bind androgen receptor/AR. Also converts androstanedione, a precursor of testosterone and estrone, to epiandrosterone. Expected to use NAD(+) as preferred electron donor for the 3beta-hydroxy-steroid dehydrogenase activity and NADPH for the 3-ketosteroid reductase activity. The sequence is that of 3 beta-hydroxysteroid dehydrogenase/Delta 5--&gt;4-isomerase type 1 from Rattus norvegicus (Rat).